A 374-amino-acid polypeptide reads, in one-letter code: 5-aminosalicylate 1,2-dioxygenase (374 aa).

Belongs to the gentisate 1,2-dioxygenase family. Requires Fe(2+) as cofactor.

It carries out the reaction 5-amino-2-hydroxybenzoate + O2 = (2Z,4E)-4-amino-6-oxohepta-2,4-dienedioate + H(+). With respect to regulation, inhibited by SDS and o-phenanthroline, a ferrous iron chelator. Partially inhibited by EDTA. Involved in the biodegradation of 3-aminobenzoate. Catalyzes the cleavage of the 5-aminosalicylate (5ASA) aromatic ring to form 4-amino-6-oxohepta-2,4-dienedioate (cis-ACOHDA). Can also convert gentisate, but the catalytic efficiency with 5ASA is 70-fold higher. This chain is 5-aminosalicylate 1,2-dioxygenase, found in Comamonas sp.